A 261-amino-acid chain; its full sequence is MEVGIFVNFQKERSSEILENIVSIFNQNGVNWLLVNEENKKTKNFDLLITIGGDGTLLNVVEKASKEATPVLAINCGRLGYLTEEVGDDIEKAIFNLLKKEYFIEERHIVEAKVKEKVFFALNDVCIVRNTFNIVDLCLYIDGVFAQEYRSDGIIVATATGSTAYSLSAGGPIVEPQLGVILVTPICPHSLSSRSLVLGSARTIKVENSSSENVQVVVDGRFVDELAPEEFVECKISQHNLKLIRLKQRNFYEILREKIKE.

Aspartate 54 functions as the Proton acceptor in the catalytic mechanism. NAD(+) is bound by residues 54–55 (DG), 123–124 (ND), arginine 150, aspartate 152, and 163–168 (TAYSLS).

This sequence belongs to the NAD kinase family. It depends on a divalent metal cation as a cofactor.

The protein resides in the cytoplasm. The catalysed reaction is NAD(+) + ATP = ADP + NADP(+) + H(+). In terms of biological role, involved in the regulation of the intracellular balance of NAD and NADP, and is a key enzyme in the biosynthesis of NADP. Catalyzes specifically the phosphorylation on 2'-hydroxyl of the adenosine moiety of NAD to yield NADP. The sequence is that of NAD kinase from Caldicellulosiruptor bescii (strain ATCC BAA-1888 / DSM 6725 / KCTC 15123 / Z-1320) (Anaerocellum thermophilum).